The primary structure comprises 150 residues: Large-conductance mechanosensitive channel (150 aa).

2 helical membrane passes run 19-39 (VGII…SDVL) and 85-105 (GIFL…FMLI).

It belongs to the MscL family. As to quaternary structure, homopentamer.

The protein resides in the cell inner membrane. Its function is as follows. Channel that opens in response to stretch forces in the membrane lipid bilayer. May participate in the regulation of osmotic pressure changes within the cell. This chain is Large-conductance mechanosensitive channel, found in Chlorobium limicola (strain DSM 245 / NBRC 103803 / 6330).